The primary structure comprises 878 residues: MSAQHLHSCKFYRLPLEIIPLICRFLSVQDIQSFIRVFPSFQTILDSSNDLFWKKKNYELRIRRNRLLRGSYAAGVSSSAMNGFVNGTQISSTPAEREYYSKSDEIKNICGLPPGPMKVEQIGHAIDHLVSETHTVDHLGSSIKASFFHIDDVPLEWISSICMQVQSFFSPAAREAISSLKSRTTTSNLLLSLFVGILFEDDLWYFFNTLYMLSSTSAIEFAYFLDSIFTVVRTDYEHYRDPLSQTLITSCTRIHNIVAVIESPYDEPNTKGLTSEQKMIVECQLNPGEVLKVKAFAGTGKTKALLEFAKSRPKDKILYVAFNKAAKEDAELRFPFNVKCSTMHGLAYGAILAQADLPQAKLERQLSNSTIASLLSLQVAFPKANRKNNPGTPSASLVASHIMFTLNRFMHSTDWQLGFRHISKRSLEVTKLSKEKLLAYTKKLWSLIVNFEYTHAPLIPDAYMKLLHLYEFPNIFSKYDYILFDEAQDFTPCMVDLIYRQKHARIVIVGDAHQCIYGFRGANACAFNENLYPSTKQLCLTKSFRFGNSVAKYANFLLSLKGENVKLKGVQNDHAYWSSASNPNNVSGAFRFFPHTIIFRTNKELILQSIRLSVSLPKEIPIAILGSMRKKAFQLLRSGSELAHGQRPSHPKLKDFSSWGEFEVHVKNSAEEDAELALVYDMADELFSESFLSRLDNCEKRLMDSKDDGDNGIILATAHQSKGLEWDNVQLGNDFRPKFDSVSFSRIGSSRYLQEEINILYVALTRAKKRLILNDTITKLYALECGLVRFAGGILTEDQLQPGKVALFVDWQIDKFSFFYETPAEGYNLLVEANEKSVWDIFFGVLSGAWQNYIANTSERLKRSMLFIENQLFAVHDQ.

One can recognise an F-box domain in the interval 8–56 (SCKFYRLPLEIIPLICRFLSVQDIQSFIRVFPSFQTILDSSNDLFWKKK).

The protein belongs to the helicase family. UvrD subfamily. Part of the E3 ubiquitin ligase Skp1-Cullin-1-F-box (SCF) complex. Interacts with skp1 and ssb1. The cofactor is Mg(2+). It depends on Mn(2+) as a cofactor.

It is found in the cytoplasm. The protein resides in the nucleus. The enzyme catalyses Couples ATP hydrolysis with the unwinding of duplex DNA by translocating in the 3'-5' direction.. It carries out the reaction ATP + H2O = ADP + phosphate + H(+). Its pathway is protein modification; protein ubiquitination. Involved in ATP-dependent DNA-unwinding in a 3' to 5' direction, and ATP-ase activities stimulated by the single-stranded DNA-binding protein ssb1. Essential for viability and normal growth of stationary phase cells and in the absence of either srs2 or rqh1 DNA helicase. Involved in DNA recombination repair of strand breaks and stalled or collapsed replication forks, on the rhp51-dependent pathway: promotes rhp51 filament dissolution from stalled forks, thereby inhibiting homologous recombination and preventing excessive recombination. Ubiquitination and DNA helicase activities are essential for controlling rhp51-dependent recombination in the absence of rad22. Plays a role in the processing of toxic recombination intermediates. Promotes proper chromosome segregation. This chain is F-box DNA helicase protein 1 (fbh1), found in Schizosaccharomyces pombe (strain 972 / ATCC 24843) (Fission yeast).